The chain runs to 169 residues: Peptide deformylase (169 aa).

Cys-91 and His-133 together coordinate Fe cation. Residue Glu-134 is part of the active site. His-137 provides a ligand contact to Fe cation.

It belongs to the polypeptide deformylase family. Requires Fe(2+) as cofactor.

The enzyme catalyses N-terminal N-formyl-L-methionyl-[peptide] + H2O = N-terminal L-methionyl-[peptide] + formate. In terms of biological role, removes the formyl group from the N-terminal Met of newly synthesized proteins. Requires at least a dipeptide for an efficient rate of reaction. N-terminal L-methionine is a prerequisite for activity but the enzyme has broad specificity at other positions. This is Peptide deformylase from Hydrogenovibrio crunogenus (strain DSM 25203 / XCL-2) (Thiomicrospira crunogena).